A 161-amino-acid polypeptide reads, in one-letter code: Putative pre-16S rRNA nuclease (161 aa).

It belongs to the YqgF nuclease family.

The protein localises to the cytoplasm. Functionally, could be a nuclease involved in processing of the 5'-end of pre-16S rRNA. The polypeptide is Putative pre-16S rRNA nuclease (Prochlorococcus marinus (strain MIT 9313)).